The primary structure comprises 1512 residues: Mitogen-activated protein kinase kinase kinase 1 (1512 aa).

Positions 1–13 are enriched in low complexity; it reads MAAAAGNRASSSG. Disordered regions lie at residues 1–37, 67–181, and 213–304; these read MAAA…SSAP, SVEL…DRPE, and VKPI…PEET. N-acetylalanine is present on Ala2. Residues Ser21 and Ser35 each carry the phosphoserine modification. Composition is skewed to low complexity over residues 81–99, 129–142, and 150–160; these read AASP…ADAA, AAPD…AAAE, and AAEPSPAAAPA. A phosphoserine mark is found at Ser137 and Ser154. The span at 162–181 shows a compositional bias: basic and acidic residues; that stretch reads REMENKETLKGLHKMDDRPE. Residues 250–260 are compositionally biased toward low complexity; it reads SPSPGNSPSGR. At Ser275 the chain carries Phosphoserine. Position 285 is a phosphothreonine (Thr285). Phosphoserine is present on residues Ser292, Ser297, and Ser300. Residues 338 to 366 form an SWIM-type zinc finger; the sequence is YRVFIGPQNCSCARGTFCIHLLFVMLRVF. Over residues 416 to 433 the composition is skewed to low complexity; that stretch reads SNSHTLSSSSTSTSSSEN. A disordered region spans residues 416–436; sequence SNSHTLSSSSTSTSSSENSIK. Residues 443–492 form an RING-type zinc finger; that stretch reads CPICLLGMLDEESLTVCEDGCRNKLHHHCMSIWAEECRRNREPLICPLCR. A phosphoserine mark is found at Ser507 and Ser531. 2 disordered regions span residues 511 to 532 and 602 to 624; these read SPSS…AGSR and STGN…GSSQ. The span at 611–624 shows a compositional bias: low complexity; sequence GSSPSGGATSGSSQ. Ser923 is subject to Phosphoserine. The interval 933–972 is disordered; sequence SISVGPSSSTTTTTTTTEQPKPMVQTKGRPHSQCLNSSPL. Low complexity predominate over residues 939-949; the sequence is SSSTTTTTTTT. Residue Ser1018 is modified to Phosphoserine. The segment covering 1032-1041 has biased composition (basic and acidic residues); the sequence is NCPENKDSDK. Positions 1032-1087 are disordered; it reads NCPENKDSDKLSPVFTQSRPLPSSNIHRPKPSRPTPGNTSKQGDPSKNSMTLDLNS. Ser1043 bears the Phosphoserine mark. 2 stretches are compositionally biased toward polar residues: residues 1045 to 1057 and 1066 to 1087; these read VFTQ…SSNI and TPGN…DLNS. A Protein kinase domain is found at 1243 to 1508; it reads WLKGQQIGLG…SRELLKHPVF (266 aa). Residues 1249–1257 and Lys1272 contribute to the ATP site; that span reads IGLGAFSSC. The Proton acceptor role is filled by Asp1369. Residues Thr1400 and Thr1412 each carry the phosphothreonine; by autocatalysis modification.

Belongs to the protein kinase superfamily. STE Ser/Thr protein kinase family. MAP kinase kinase kinase subfamily. As to quaternary structure, binds both upstream activators and downstream substrates in multimolecular complexes through its N-terminus. Oligomerizes after binding MAP2K4 or TRAF2. Interacts with AXIN1. Interacts (via the kinase catalytic domain) with STK38. Interacts with GRIPAP1. Requires Mg(2+) as cofactor. Post-translationally, autophosphorylated.

It catalyses the reaction L-seryl-[protein] + ATP = O-phospho-L-seryl-[protein] + ADP + H(+). The catalysed reaction is L-threonyl-[protein] + ATP = O-phospho-L-threonyl-[protein] + ADP + H(+). It carries out the reaction S-ubiquitinyl-[E2 ubiquitin-conjugating enzyme]-L-cysteine + [acceptor protein]-L-lysine = [E2 ubiquitin-conjugating enzyme]-L-cysteine + N(6)-ubiquitinyl-[acceptor protein]-L-lysine.. Activated by autophosphorylation on Thr-1400 and Thr-1412 following oligomerization. In terms of biological role, component of a protein kinase signal transduction cascade. Activates the ERK and JNK kinase pathways by phosphorylation of MAP2K1 and MAP2K4. May phosphorylate the MAPK8/JNK1 kinase. Activates CHUK and IKBKB, the central protein kinases of the NF-kappa-B pathway. This chain is Mitogen-activated protein kinase kinase kinase 1 (MAP3K1), found in Homo sapiens (Human).